Consider the following 647-residue polypeptide: CRE-binding bZIP protein SKO1 (647 aa).

Disordered stretches follow at residues 1–119, 135–204, 305–331, and 353–429; these read MSSE…GSKR, STTN…QMPG, TPTTNTTDGTVNNSISNSNFSPNTSTK, and KENE…EEQE. Polar residues predominate over residues 51-85; that stretch reads RNNSTSTITQHSQRSTHSLNSIPEENGNSTVTDNS. Phosphoserine is present on Ser94. Thr113 is modified (phosphothreonine). 2 stretches are compositionally biased toward low complexity: residues 138–194 and 305–329; these read NPSQ…SGNG and TPTTNTTDGTVNNSISNSNFSPNTS. Composition is skewed to polar residues over residues 357–368 and 396–405; these read NLTTQIENNDQF and RKNSAVTTAP. Phosphoserine is present on Ser399. Residues 429–492 enclose the bZIP domain; that stretch reads ERKRKEFLER…PSSSSNSQFN (64 aa). The interval 430–451 is basic motif; it reads RKRKEFLERNRVAASKFRKRKK. Positions 454–461 are leucine-zipper; sequence IKKIENDL. Residue Ser558 is modified to Phosphoserine.

It belongs to the bZIP family.

It is found in the nucleus. Functionally, binds to the CRE motif 5'-TGACGTCA-3' and acts as a repressor of transcription of the SUC2 gene and most probably other genes. In Saccharomyces cerevisiae (strain ATCC 204508 / S288c) (Baker's yeast), this protein is CRE-binding bZIP protein SKO1 (SKO1).